The sequence spans 237 residues: Uridylate kinase (237 aa).

K9–G12 lines the ATP pocket. Positions G17 to G22 are involved in allosteric activation by GTP. G51 is a binding site for UMP. G52 and R56 together coordinate ATP. Residues D72 and T133–T140 contribute to the UMP site. The ATP site is built by T160, Y166, and D169.

The protein belongs to the UMP kinase family. As to quaternary structure, homohexamer.

The protein localises to the cytoplasm. The catalysed reaction is UMP + ATP = UDP + ADP. The protein operates within pyrimidine metabolism; CTP biosynthesis via de novo pathway; UDP from UMP (UMPK route): step 1/1. Allosterically activated by GTP. Inhibited by UTP. In terms of biological role, catalyzes the reversible phosphorylation of UMP to UDP. This Sulfurimonas denitrificans (strain ATCC 33889 / DSM 1251) (Thiomicrospira denitrificans (strain ATCC 33889 / DSM 1251)) protein is Uridylate kinase.